A 364-amino-acid chain; its full sequence is Peptide chain release factor 1 (364 aa).

At Q232 the chain carries N5-methylglutamine.

Belongs to the prokaryotic/mitochondrial release factor family. Methylated by PrmC. Methylation increases the termination efficiency of RF1.

It localises to the cytoplasm. In terms of biological role, peptide chain release factor 1 directs the termination of translation in response to the peptide chain termination codons UAG and UAA. This Sorangium cellulosum (strain So ce56) (Polyangium cellulosum (strain So ce56)) protein is Peptide chain release factor 1.